A 235-amino-acid chain; its full sequence is Homeobox-leucine zipper protein ATHB-12 (235 aa).

Positions 27–86 (KSNNQKRFSEEQIKSLELIFESETRLEPRKKVQVARELGLQPRQVAIWFQNKRARWKTKQ) form a DNA-binding region, homeobox. A leucine-zipper region spans residues 87–122 (LEKEYNTLRANYNNLASQFEIMKKEKQSLVSELQRL). Basic and acidic residues-rich tracts occupy residues 128-138 (RPKEEKHHECC) and 152-162 (HNGKSEPEGRL). The interval 128–167 (RPKEEKHHECCGDQGLALSSSTESHNGKSEPEGRLDQGSV) is disordered.

Belongs to the HD-ZIP homeobox family. Class I subfamily. Interacts with TFIIB1. As to expression, widely expressed.

It localises to the nucleus. Functionally, probable transcription activator that may act as growth regulators in response to water deficit. The protein is Homeobox-leucine zipper protein ATHB-12 (ATHB-12) of Arabidopsis thaliana (Mouse-ear cress).